Consider the following 414-residue polypeptide: Esterase FrsA (414 aa).

It belongs to the FrsA family.

The enzyme catalyses a carboxylic ester + H2O = an alcohol + a carboxylate + H(+). Its function is as follows. Catalyzes the hydrolysis of esters. The protein is Esterase FrsA of Escherichia coli O6:K15:H31 (strain 536 / UPEC).